The primary structure comprises 441 residues: CBL-interacting serine/threonine-protein kinase 3 (441 aa).

The region spanning 14–269 (YEVGRTIGEG…PQEVFEDEWF (256 aa)) is the Protein kinase domain. Residues 20-28 (IGEGTFAKV) and lysine 43 contribute to the ATP site. Residue aspartate 137 is the Proton acceptor of the active site. Residues 155 to 184 (DFGLSALSQQVRDDGLLHTSCGTPNYVAPE) form an activation loop region. In terms of domain architecture, NAF spans 307–331 (EQPAAINAFEIISMSRGLNLENLFD). Positions 337–366 (KRETRITLRGGANEIIEKIEEAAKPLGFDV) are PPI.

This sequence belongs to the protein kinase superfamily. CAMK Ser/Thr protein kinase family. SNF1 subfamily. In terms of assembly, interacts with CBL3 and CBL9. It depends on Mn(2+) as a cofactor. As to expression, mostly expressed in germinating seeds and young seedlings. Detected at low levels in roots, stems, leaves and flowers.

It catalyses the reaction L-seryl-[protein] + ATP = O-phospho-L-seryl-[protein] + ADP + H(+). It carries out the reaction L-threonyl-[protein] + ATP = O-phospho-L-threonyl-[protein] + ADP + H(+). In terms of biological role, involved in the resistance to some abiotic stresses (e.g. high salt, hyperosmotic stress) in young seedlings, by regulating the expression of several stress-inducible genes (cold- and salt-induced genes but not drought-responsive genes). Required for the ABA response during germination. CIPK serine-threonine protein kinases interact with CBL proteins. Binding of a CBL protein to the regulatory NAF domain of CIPK protein lead to the activation of the kinase in a calcium-dependent manner. The CBL9/CIPK3 complex acts in the regulation of abscisic acid response in seed germination. The protein is CBL-interacting serine/threonine-protein kinase 3 (CIPK3) of Arabidopsis thaliana (Mouse-ear cress).